The chain runs to 98 residues: ESAT-6-like protein EsxM (98 aa).

The protein belongs to the WXG100 family. CFP-10 subfamily.

Its subcellular location is the secreted. This chain is ESAT-6-like protein EsxM (esxM), found in Mycobacterium bovis (strain ATCC BAA-935 / AF2122/97).